The following is a 327-amino-acid chain: 2-phosphoglycerate kinase (327 aa).

The segment covering 1 to 20 (MSEKSSRKERDEKTEKETAR) has biased composition (basic and acidic residues). Positions 1–27 (MSEKSSRKERDEKTEKETARQGKHRRI) are disordered. Positions 25–111 (RRIRVKSRHY…LWRRIKKREE (87 aa)) constitute an ATP-cone domain.

The protein belongs to the 2-phosphoglycerate kinase family. Requires a divalent metal cation as cofactor.

It catalyses the reaction (2R)-2-phosphoglycerate + ATP = (2R)-2,3-bisphosphoglycerate + ADP + H(+). Its pathway is thermoadapter biosynthesis; cyclic 2,3-diphosphoglycerate biosynthesis; cyclic 2,3-diphosphoglycerate from 2-phospho-D-glycerate: step 1/2. Its function is as follows. Catalyzes the phosphorylation of 2-phosphoglycerate to 2,3-diphosphoglycerate. Involved in the biosynthesis of cyclic 2,3-bisphosphoglycerate, a thermoprotectant. The polypeptide is 2-phosphoglycerate kinase (Methanopyrus kandleri (strain AV19 / DSM 6324 / JCM 9639 / NBRC 100938)).